A 519-amino-acid chain; its full sequence is Light-independent protochlorophyllide reductase subunit B (519 aa).

D36 provides a ligand contact to [4Fe-4S] cluster. Residue D274 is the Proton donor of the active site. Substrate is bound at residue 409–410 (GL). The disordered stretch occupies residues 426–465 (DEAGPSHHGGHSPKPSEAARTPDKVEERADPAPEAPQTGS). The span at 445–456 (RTPDKVEERADP) shows a compositional bias: basic and acidic residues.

Belongs to the ChlB/BchB/BchZ family. In terms of assembly, protochlorophyllide reductase is composed of three subunits; BchL, BchN and BchB. Forms a heterotetramer of two BchB and two BchN subunits. The cofactor is [4Fe-4S] cluster.

It carries out the reaction chlorophyllide a + oxidized 2[4Fe-4S]-[ferredoxin] + 2 ADP + 2 phosphate = protochlorophyllide a + reduced 2[4Fe-4S]-[ferredoxin] + 2 ATP + 2 H2O. The protein operates within porphyrin-containing compound metabolism; bacteriochlorophyll biosynthesis (light-independent). Its function is as follows. Component of the dark-operative protochlorophyllide reductase (DPOR) that uses Mg-ATP and reduced ferredoxin to reduce ring D of protochlorophyllide (Pchlide) to form chlorophyllide a (Chlide). This reaction is light-independent. The NB-protein (BchN-BchB) is the catalytic component of the complex. This Jannaschia sp. (strain CCS1) protein is Light-independent protochlorophyllide reductase subunit B.